Reading from the N-terminus, the 437-residue chain is ATP-dependent protease ATPase subunit HslU (437 aa).

Residues V18, 60–65 (GCGKTE), D250, E315, and R387 contribute to the ATP site.

This sequence belongs to the ClpX chaperone family. HslU subfamily. In terms of assembly, a double ring-shaped homohexamer of HslV is capped on each side by a ring-shaped HslU homohexamer. The assembly of the HslU/HslV complex is dependent on binding of ATP.

The protein localises to the cytoplasm. In terms of biological role, ATPase subunit of a proteasome-like degradation complex; this subunit has chaperone activity. The binding of ATP and its subsequent hydrolysis by HslU are essential for unfolding of protein substrates subsequently hydrolyzed by HslV. HslU recognizes the N-terminal part of its protein substrates and unfolds these before they are guided to HslV for hydrolysis. The chain is ATP-dependent protease ATPase subunit HslU from Methylobacterium sp. (strain 4-46).